A 558-amino-acid polypeptide reads, in one-letter code: Formate--tetrahydrofolate ligase (558 aa).

ATP is bound at residue 66–73 (TPAGEGKT).

Belongs to the formate--tetrahydrofolate ligase family.

The catalysed reaction is (6S)-5,6,7,8-tetrahydrofolate + formate + ATP = (6R)-10-formyltetrahydrofolate + ADP + phosphate. It participates in one-carbon metabolism; tetrahydrofolate interconversion. In Clostridioides difficile (strain 630) (Peptoclostridium difficile), this protein is Formate--tetrahydrofolate ligase.